Here is a 603-residue protein sequence, read N- to C-terminus: Prostaglandin G/H synthase 2 (603 aa).

The N-terminal stretch at 1-17 (MLLPCALLAALLAAGHA) is a signal peptide. One can recognise an EGF-like domain in the interval 18–55 (ANPCCSLPCQNRGVCMTTGFDRYECDCTRTGYYGENCT). 4 disulfide bridges follow: cysteine 21/cysteine 32, cysteine 22/cysteine 145, cysteine 26/cysteine 42, and cysteine 44/cysteine 54. 2 N-linked (GlcNAc...) asparagine glycosylation sites follow: asparagine 53 and asparagine 90. Arginine 106 is a binding site for substrate. Asparagine 130 carries N-linked (GlcNAc...) asparagine glycosylation. Histidine 193 (proton acceptor) is an active-site residue. Residue tyrosine 341 participates in substrate binding. Tyrosine 371 functions as the For cyclooxygenase activity in the catalytic mechanism. Histidine 374 contacts heme b. A disulfide bridge connects residues cysteine 555 and cysteine 561.

This sequence belongs to the prostaglandin G/H synthase family. In terms of assembly, homodimer. Requires heme b as cofactor.

The protein resides in the microsome membrane. Its subcellular location is the endoplasmic reticulum membrane. The catalysed reaction is (5Z,8Z,11Z,14Z)-eicosatetraenoate + AH2 + 2 O2 = prostaglandin H2 + A + H2O. It catalyses the reaction (9Z,12Z)-octadecadienoate + AH2 + O2 = (9R)-hydroxy-(10E,12Z)-octadecadienoate + A + H2O. The enzyme catalyses (9Z,12Z)-octadecadienoate + AH2 + O2 = (9S)-hydroxy-(10E,12Z)-octadecadienoate + A + H2O. It carries out the reaction (9Z,12Z)-octadecadienoate + AH2 + O2 = (13S)-hydroxy-(9Z,11E)-octadecadienoate + A + H2O. The catalysed reaction is (9Z,12Z)-octadecadienoate + AH2 + O2 = (13R)-hydroxy-(9Z,11E)-octadecadienoate + A + H2O. It functions in the pathway lipid metabolism; prostaglandin biosynthesis. Functionally, dual cyclooxygenase and peroxidase in the biosynthesis pathway of prostanoids, a class of C20 oxylipins mainly derived from arachidonate ((5Z,8Z,11Z,14Z)-eicosatetraenoate, AA, C20:4(n-6)), with a particular role in the inflammatory response. The cyclooxygenase activity oxygenates AA to the hydroperoxy endoperoxide prostaglandin G2 (PGG2), and the peroxidase activity reduces PGG2 to the hydroxy endoperoxide prostaglandin H2 (PGH2), the precursor of all 2-series prostaglandins and thromboxanes. This complex transformation is initiated by abstraction of hydrogen at carbon 13 (with S-stereochemistry), followed by insertion of molecular O2 to form the endoperoxide bridge between carbon 9 and 11 that defines prostaglandins. The insertion of a second molecule of O2 (bis-oxygenase activity) yields a hydroperoxy group in PGG2 that is then reduced to PGH2 by two electrons. Similarly catalyzes successive cyclooxygenation and peroxidation of dihomo-gamma-linoleate (DGLA, C20:3(n-6)) and eicosapentaenoate (EPA, C20:5(n-3)) to corresponding PGH1 and PGH3, the precursors of 1- and 3-series prostaglandins. In an alternative pathway of prostanoid biosynthesis, converts 2-arachidonoyl lysophopholipids to prostanoid lysophopholipids, which are then hydrolyzed by intracellular phospholipases to release free prostanoids. Metabolizes 2-arachidonoyl glycerol yielding the glyceryl ester of PGH2, a process that can contribute to pain response. Generates lipid mediators from n-3 and n-6 polyunsaturated fatty acids (PUFAs) via a lipoxygenase-type mechanism. Oxygenates PUFAs to hydroperoxy compounds and then reduces them to corresponding alcohols. Plays a role in the generation of resolution phase interaction products (resolvins) during both sterile and infectious inflammation. Metabolizes docosahexaenoate (DHA, C22:6(n-3)) to 17R-HDHA, a precursor of the D-series resolvins (RvDs). As a component of the biosynthetic pathway of E-series resolvins (RvEs), converts eicosapentaenoate (EPA, C20:5(n-3)) primarily to 18S-HEPE that is further metabolized by ALOX5 and LTA4H to generate 18S-RvE1 and 18S-RvE2. In vascular endothelial cells, converts docosapentaenoate (DPA, C22:5(n-3)) to 13R-HDPA, a precursor for 13-series resolvins (RvTs) shown to activate macrophage phagocytosis during bacterial infection. In activated leukocytes, contributes to oxygenation of hydroxyeicosatetraenoates (HETE) to diHETES (5,15-diHETE and 5,11-diHETE). Can also use linoleate (LA, (9Z,12Z)-octadecadienoate, C18:2(n-6)) as substrate and produce hydroxyoctadecadienoates (HODEs) in a regio- and stereospecific manner, being (9R)-HODE ((9R)-hydroxy-(10E,12Z)-octadecadienoate) and (13S)-HODE ((13S)-hydroxy-(9Z,11E)-octadecadienoate) its major products. During neuroinflammation, plays a role in neuronal secretion of specialized preresolving mediators (SPMs) 15R-lipoxin A4 that regulates phagocytic microglia. In Gallus gallus (Chicken), this protein is Prostaglandin G/H synthase 2 (PTGS2).